The primary structure comprises 142 residues: Large ribosomal subunit protein uL11 (142 aa).

Belongs to the universal ribosomal protein uL11 family. In terms of assembly, part of the ribosomal stalk of the 50S ribosomal subunit. Interacts with L10 and the large rRNA to form the base of the stalk. L10 forms an elongated spine to which L12 dimers bind in a sequential fashion forming a multimeric L10(L12)X complex. One or more lysine residues are methylated.

Its function is as follows. Forms part of the ribosomal stalk which helps the ribosome interact with GTP-bound translation factors. The chain is Large ribosomal subunit protein uL11 from Magnetococcus marinus (strain ATCC BAA-1437 / JCM 17883 / MC-1).